A 347-amino-acid chain; its full sequence is Protein-arginine kinase (347 aa).

The Phosphagen kinase C-terminal domain maps to 22 to 247 (LVVSTRIRLA…EQVIQAERHA (226 aa)). ATP contacts are provided by residues 25 to 29 (STRIR), histidine 85, arginine 118, 169 to 173 (RASVM), and 200 to 205 (RGRYGE). Positions 330 to 335 (RDRERA) match the RDXXRA motif of the pArg binding pocket involved in allosteric regulation motif.

It belongs to the ATP:guanido phosphotransferase family.

It catalyses the reaction L-arginyl-[protein] + ATP = N(omega)-phospho-L-arginyl-[protein] + ADP + H(+). With respect to regulation, appears to be allosterically activated by the binding of pArg-containing polypeptides to the pArg-binding pocket localized in the C-terminal domain of McsB. Its function is as follows. Catalyzes the specific phosphorylation of arginine residues in proteins. The protein is Protein-arginine kinase of Exiguobacterium sp. (strain ATCC BAA-1283 / AT1b).